Consider the following 161-residue polypeptide: Transcription elongation factor GreA (161 aa).

It belongs to the GreA/GreB family.

Functionally, necessary for efficient RNA polymerase transcription elongation past template-encoded arresting sites. The arresting sites in DNA have the property of trapping a certain fraction of elongating RNA polymerases that pass through, resulting in locked ternary complexes. Cleavage of the nascent transcript by cleavage factors such as GreA or GreB allows the resumption of elongation from the new 3'terminus. GreA releases sequences of 2 to 3 nucleotides. In Desulfotalea psychrophila (strain LSv54 / DSM 12343), this protein is Transcription elongation factor GreA.